The chain runs to 312 residues: Glutathione synthetase (312 aa).

Residues 125-309 (KIFVTEFPDL…IAALFWDAVE (185 aa)) form the ATP-grasp domain. 151–207 (RREFGDIILKPLYGNGGAGVFHLADGDRNLTSLLEMFGQLFREPFIAQRYLKDVRAG) serves as a coordination point for ATP. Residues Glu280 and Asn282 each coordinate Mg(2+).

This sequence belongs to the prokaryotic GSH synthase family. Mg(2+) serves as cofactor. Requires Mn(2+) as cofactor.

It carries out the reaction gamma-L-glutamyl-L-cysteine + glycine + ATP = glutathione + ADP + phosphate + H(+). It functions in the pathway sulfur metabolism; glutathione biosynthesis; glutathione from L-cysteine and L-glutamate: step 2/2. The chain is Glutathione synthetase from Brucella melitensis biotype 1 (strain ATCC 23456 / CCUG 17765 / NCTC 10094 / 16M).